The following is a 906-amino-acid chain: Cadherin-2 (906 aa).

Positions 1–25 are cleaved as a signal peptide; that stretch reads MCRIAGAPRTLLPLLAALLQASVEA. Residues 26-159 constitute a propeptide that is removed on maturation; the sequence is SGEIALCKTG…HSGHLQRQKR (134 aa). Phosphoserine occurs at positions 96 and 135. Cadherin domains follow at residues 160-267, 268-382, 383-497, 498-603, and 604-714; these read DWVI…RPEF, LHQV…PPEF, TAMT…NPYF, APNP…DNAP, and QVLP…DVDR. At 160-724 the chain is on the extracellular side; the sequence is DWVIPPINLP…IVGAGLGTGA (565 aa). E170 is a binding site for Ca(2+). N190 carries N-linked (GlcNAc...) asparagine glycosylation. The Ca(2+) site is built by D226, E228, D259, M260, N261, D262, and N263. The N-linked (GlcNAc...) asparagine glycan is linked to N273. The Ca(2+) site is built by D293, D295, and N301. The N-linked (GlcNAc...) asparagine glycan is linked to N325. Position 353 (D353) interacts with Ca(2+). Residues N402, N572, N622, N651, and N692 are each glycosylated (N-linked (GlcNAc...) asparagine). Residues 725-745 traverse the membrane as a helical segment; sequence IIAILLCIIILLILVLMFVVW. Residues 746–906 lie on the Cytoplasmic side of the membrane; it reads MKRRDKERQA…LADMYGGGDD (161 aa). Low complexity predominate over residues 863–880; that stretch reads SGSTAGSLSSLNSSSSGG. A disordered region spans residues 863 to 884; sequence SGSTAGSLSSLNSSSSGGEQDY.

Homodimer (via extracellular region). Can also form heterodimers with other cadherins (via extracellular region). Dimerization occurs in trans, i.e. with a cadherin chain from another cell. Interacts with CDCP1. Interacts with PCDH8; this complex may also include TAOK2. The interaction with PCDH8 may lead to internalization through TAOK2/p38 MAPK pathway. Identified in a complex containing FGFR4, NCAM1, CDH2, PLCG1, FRS2, SRC, SHC1, GAP43 and CTTN. May interact with OBSCN (via protein kinase domain 2). Interacts with FBXO45. In terms of processing, cleaved by MMP24. Ectodomain cleavage leads to the generation of a soluble 90 kDa N-terminal soluble fragment and a 45 kDa membrane-bound C-terminal fragment 1 (CTF1), which is further cleaved by gamma-secretase into a 35 kDa. Cleavage in neural stem cells by MMP24 affects CDH2-mediated anchorage of neural stem cells to ependymocytes in the adult subependymal zone, leading to modulate neural stem cell quiescence.

Its subcellular location is the cell membrane. The protein resides in the sarcolemma. It localises to the cell junction. The protein localises to the cell surface. It is found in the desmosome. Its subcellular location is the adherens junction. In terms of biological role, calcium-dependent cell adhesion protein; preferentially mediates homotypic cell-cell adhesion by dimerization with a CDH2 chain from another cell. Cadherins may thus contribute to the sorting of heterogeneous cell types. Acts as a regulator of neural stem cells quiescence by mediating anchorage of neural stem cells to ependymocytes in the adult subependymal zone: upon cleavage by MMP24, CDH2-mediated anchorage is affected, leading to modulate neural stem cell quiescence. Plays a role in cell-to-cell junction formation between pancreatic beta cells and neural crest stem (NCS) cells, promoting the formation of processes by NCS cells. Required for proper neurite branching. Required for pre- and postsynaptic organization. CDH2 may be involved in neuronal recognition mechanism. In hippocampal neurons, may regulate dendritic spine density. This is Cadherin-2 (CDH2) from Callithrix jacchus (White-tufted-ear marmoset).